The primary structure comprises 465 residues: Ran-binding protein 3-like (465 aa).

A RanBD1 domain is found at 276 to 417 (SQPSRKCLLE…ALQSFNKQRD (142 aa)).

In terms of assembly, interacts with SMAD1, SMAD5 and SMAD8; the interaction (with SMAD at least) increases when SMAD1 is not phosphorylated and mediates SMAD1 nuclear export.

The protein resides in the nucleus. It is found in the cytoplasm. Its function is as follows. Nuclear export factor for BMP-specific SMAD1/5/8 that plays a critical role in terminating BMP signaling and regulating mesenchymal stem cell differentiation by blocking osteoblast differentiation to promote myogenic differention. Directly recognizes dephosphorylated SMAD1/5/8 and mediates their nuclear export in a Ran-dependent manner. The sequence is that of Ran-binding protein 3-like (RANBP3L) from Homo sapiens (Human).